A 94-amino-acid chain; its full sequence is Large ribosomal subunit protein bL25 (94 aa).

This sequence belongs to the bacterial ribosomal protein bL25 family. Part of the 50S ribosomal subunit; part of the 5S rRNA/L5/L18/L25 subcomplex. Contacts the 5S rRNA. Binds to the 5S rRNA independently of L5 and L18.

Its function is as follows. This is one of the proteins that binds to the 5S RNA in the ribosome where it forms part of the central protuberance. This Escherichia coli O157:H7 protein is Large ribosomal subunit protein bL25.